The sequence spans 615 residues: Putative lipase ATG15 (615 aa).

Over 1 to 22 the chain is Cytoplasmic; sequence MKQLGEEHPLISTKRPRAKKRR. A helical; Signal-anchor for type II membrane protein transmembrane segment spans residues 23-43; it reads SIAICAAVLTLIAFGFIRFVP. At 44–615 the chain is on the lumenal side; that stretch reads KDILAGGWYE…NSAAHHVSSI (572 aa). Asn-253, Asn-276, and Asn-360 each carry an N-linked (GlcNAc...) asparagine glycan. Ser-378 serves as the catalytic Charge relay system. The segment at 520-559 is disordered; that stretch reads NKNDEPPLPNPLHPKPPSTVRSSNMPHEQSPNASRSLSSL. Residues 525 to 536 are compositionally biased toward pro residues; that stretch reads PPLPNPLHPKPP. Positions 538–559 are enriched in polar residues; sequence TVRSSNMPHEQSPNASRSLSSL. An N-linked (GlcNAc...) asparagine glycan is attached at Asn-551.

The protein belongs to the AB hydrolase superfamily. Lipase family. As to quaternary structure, binds to both phosphatidylinositol (PI) and phosphatidylinositol 3,5-bisphosphate (PIP2).

Its subcellular location is the endosome. The protein resides in the multivesicular body membrane. The protein localises to the prevacuolar compartment membrane. The catalysed reaction is a triacylglycerol + H2O = a diacylglycerol + a fatty acid + H(+). Lipase which is essential for lysis of subvacuolar cytoplasm to vacuole targeted bodies and intravacuolar autophagic bodies. Involved in the lysis of intravacuolar multivesicular body (MVB) vesicles. The intravacuolar membrane disintegration by ATG15 is critical to life span extension. This is Putative lipase ATG15 (ATG15) from Debaryomyces hansenii (strain ATCC 36239 / CBS 767 / BCRC 21394 / JCM 1990 / NBRC 0083 / IGC 2968) (Yeast).